Reading from the N-terminus, the 407-residue chain is Imidazolonepropionase (407 aa).

Fe(3+)-binding residues include histidine 68 and histidine 70. The Zn(2+) site is built by histidine 68 and histidine 70. The 4-imidazolone-5-propanoate site is built by arginine 77, tyrosine 140, and histidine 173. Residue tyrosine 140 participates in N-formimidoyl-L-glutamate binding. Histidine 238 contacts Fe(3+). Histidine 238 contributes to the Zn(2+) binding site. Glutamine 241 contributes to the 4-imidazolone-5-propanoate binding site. Fe(3+) is bound at residue aspartate 313. Zn(2+) is bound at residue aspartate 313. N-formimidoyl-L-glutamate-binding residues include asparagine 315 and glycine 317. Residue threonine 318 coordinates 4-imidazolone-5-propanoate.

The protein belongs to the metallo-dependent hydrolases superfamily. HutI family. It depends on Zn(2+) as a cofactor. Requires Fe(3+) as cofactor.

The protein localises to the cytoplasm. It catalyses the reaction 4-imidazolone-5-propanoate + H2O = N-formimidoyl-L-glutamate. The protein operates within amino-acid degradation; L-histidine degradation into L-glutamate; N-formimidoyl-L-glutamate from L-histidine: step 3/3. In terms of biological role, catalyzes the hydrolytic cleavage of the carbon-nitrogen bond in imidazolone-5-propanoate to yield N-formimidoyl-L-glutamate. It is the third step in the universal histidine degradation pathway. This is Imidazolonepropionase from Burkholderia lata (strain ATCC 17760 / DSM 23089 / LMG 22485 / NCIMB 9086 / R18194 / 383).